A 527-amino-acid chain; its full sequence is Bifunctional purine biosynthesis protein PurH (527 aa).

Residues 9 to 156 (NAKRPIRRAL…KNHPSVAVVV (148 aa)) enclose the MGS-like domain.

The protein belongs to the PurH family.

The catalysed reaction is (6R)-10-formyltetrahydrofolate + 5-amino-1-(5-phospho-beta-D-ribosyl)imidazole-4-carboxamide = 5-formamido-1-(5-phospho-D-ribosyl)imidazole-4-carboxamide + (6S)-5,6,7,8-tetrahydrofolate. It carries out the reaction IMP + H2O = 5-formamido-1-(5-phospho-D-ribosyl)imidazole-4-carboxamide. It functions in the pathway purine metabolism; IMP biosynthesis via de novo pathway; 5-formamido-1-(5-phospho-D-ribosyl)imidazole-4-carboxamide from 5-amino-1-(5-phospho-D-ribosyl)imidazole-4-carboxamide (10-formyl THF route): step 1/1. The protein operates within purine metabolism; IMP biosynthesis via de novo pathway; IMP from 5-formamido-1-(5-phospho-D-ribosyl)imidazole-4-carboxamide: step 1/1. This is Bifunctional purine biosynthesis protein PurH from Mycolicibacterium paratuberculosis (strain ATCC BAA-968 / K-10) (Mycobacterium paratuberculosis).